Reading from the N-terminus, the 283-residue chain is Protein/nucleic acid deglycase HchA (283 aa).

Residues His-86, Glu-91, and His-123 each coordinate Zn(2+). Cys-185 (nucleophile) is an active-site residue.

It belongs to the peptidase C56 family. HchA subfamily. Homodimer.

The protein resides in the cytoplasm. It catalyses the reaction N(omega)-(1-hydroxy-2-oxopropyl)-L-arginyl-[protein] + H2O = lactate + L-arginyl-[protein] + H(+). It carries out the reaction N(6)-(1-hydroxy-2-oxopropyl)-L-lysyl-[protein] + H2O = lactate + L-lysyl-[protein] + H(+). The enzyme catalyses S-(1-hydroxy-2-oxopropyl)-L-cysteinyl-[protein] + H2O = lactate + L-cysteinyl-[protein] + H(+). The catalysed reaction is N(omega)-(1-hydroxy-2-oxoethyl)-L-arginyl-[protein] + H2O = L-arginyl-[protein] + glycolate + H(+). It catalyses the reaction N(6)-(1-hydroxy-2-oxoethyl)-L-lysyl-[protein] + H2O = glycolate + L-lysyl-[protein] + H(+). It carries out the reaction S-(1-hydroxy-2-oxoethyl)-L-cysteinyl-[protein] + H2O = glycolate + L-cysteinyl-[protein] + H(+). The enzyme catalyses N(2)-(1-hydroxy-2-oxopropyl)-dGTP + H2O = lactate + dGTP + H(+). The catalysed reaction is N(2)-(1-hydroxy-2-oxopropyl)-GTP + H2O = lactate + GTP + H(+). It catalyses the reaction N(2)-(1-hydroxy-2-oxopropyl)-GDP + H2O = lactate + GDP + H(+). It carries out the reaction N(2)-(1-hydroxy-2-oxopropyl)-GMP + H2O = lactate + GMP + H(+). The enzyme catalyses N(2)-(1-hydroxy-2-oxoethyl)-dGTP + H2O = dGTP + glycolate + H(+). The catalysed reaction is N(2)-(1-hydroxy-2-oxoethyl)-GTP + H2O = glycolate + GTP + H(+). It catalyses the reaction N(2)-(1-hydroxy-2-oxoethyl)-GDP + H2O = glycolate + GDP + H(+). It carries out the reaction N(2)-(1-hydroxy-2-oxoethyl)-GMP + H2O = glycolate + GMP + H(+). The enzyme catalyses an N(2)-(1-hydroxy-2-oxopropyl)-guanosine in RNA + H2O = a guanosine in RNA + lactate + H(+). The catalysed reaction is an N(2)-(1-hydroxy-2-oxopropyl)-2'-deoxyguanosine in DNA + H2O = a 2'-deoxyguanosine in DNA + lactate + H(+). It catalyses the reaction an N(2)-(1-hydroxy-2-oxoethyl)-guanosine in RNA + H2O = a guanosine in RNA + glycolate + H(+). It carries out the reaction an N(2)-(1-hydroxy-2-oxoethyl)-2'-deoxyguanosine in DNA + H2O = a 2'-deoxyguanosine in DNA + glycolate + H(+). Functionally, protein and nucleotide deglycase that catalyzes the deglycation of the Maillard adducts formed between amino groups of proteins or nucleotides and reactive carbonyl groups of glyoxals. Thus, functions as a protein deglycase that repairs methylglyoxal- and glyoxal-glycated proteins, and releases repaired proteins and lactate or glycolate, respectively. Deglycates cysteine, arginine and lysine residues in proteins, and thus reactivates these proteins by reversing glycation by glyoxals. Acts on early glycation intermediates (hemithioacetals and aminocarbinols), preventing the formation of Schiff bases and advanced glycation endproducts (AGE). Also functions as a nucleotide deglycase able to repair glycated guanine in the free nucleotide pool (GTP, GDP, GMP, dGTP) and in DNA and RNA. Is thus involved in a major nucleotide repair system named guanine glycation repair (GG repair), dedicated to reversing methylglyoxal and glyoxal damage via nucleotide sanitization and direct nucleic acid repair. Plays an important role in protecting cells from carbonyl stress. The chain is Protein/nucleic acid deglycase HchA from Escherichia coli O45:K1 (strain S88 / ExPEC).